A 113-amino-acid polypeptide reads, in one-letter code: Hydrogenase maturation factor HybF (113 aa).

2 residues coordinate Ni(2+): H2 and E3. 4 residues coordinate Zn(2+): C73, C76, C89, and C92.

The protein belongs to the HypA/HybF family. HybF subfamily.

Its function is as follows. Involved in the maturation of [NiFe] hydrogenases. Required for nickel insertion into the metal center of the hydrogenase. The protein is Hydrogenase maturation factor HybF of Salmonella typhi.